The primary structure comprises 327 residues: Complex I intermediate-associated protein 30, mitochondrial (327 aa).

Residues Met1–Leu24 constitute a mitochondrion transit peptide. The disordered stretch occupies residues Pro42–His63. Over residues Arg53 to His63 the composition is skewed to basic and acidic residues. Position 318 is a phosphoserine (Ser318).

The protein belongs to the CIA30 family. In terms of assembly, part of the mitochondrial complex I assembly/MCIA complex that comprises at least the core subunits TMEM126B, NDUFAF1, ECSIT and ACAD9 and complement subunits such as COA1 and TMEM186. Interacts with ECSIT. Interacts with ACAD9. At early stages of complex I assembly, it is found in intermediate subcomplexes that contain different subunits including NDUFB6, NDUFA6, NDUFA9, NDUFS3, NDUFS7, ND1, ND2 and ND3. Interacts with TMEM70 and TMEM242. In terms of tissue distribution, ubiquitous.

The protein localises to the mitochondrion. It localises to the mitochondrion matrix. Functionally, as part of the MCIA complex, involved in the assembly of the mitochondrial complex I. The protein is Complex I intermediate-associated protein 30, mitochondrial of Homo sapiens (Human).